A 340-amino-acid polypeptide reads, in one-letter code: Guanine nucleotide-binding protein G(I)/G(S)/G(T) subunit beta-1 (340 aa).

N-acetylserine is present on Ser2. Ser2 is subject to Phosphoserine. WD repeat units follow at residues 46–94, 95–140, 141–181, 182–223, 224–267, 268–309, and 310–340; these read RTRR…HAIP, LRSS…RELA, GHTG…TTFT, GHTG…QTFT, GHES…YSHD, NIIC…GVLA, and GHDD…KIWN. At His266 the chain carries Phosphohistidine.

Belongs to the WD repeat G protein beta family. G proteins are composed of 3 units, alpha, beta and gamma. The heterodimer formed by GNB1 and GNG2 interacts with ARHGEF5. The heterodimer formed by GNB1 and GNG2 interacts with GRK2. Forms a complex with GNAO1 and GNG3. Interacts with ARHGEF18 and RASD2. Forms complexes with TAS2R14 and G-proteins; these complexes play a role in the perception of bitterness. Component of the TAS2R14-GNAI1 complex, consisting of TAS2R14, GNAI1, GNB1 and GNG2. Component of the TAS2R14-GNAT3 complex, consisting of TAS2R14, GNAT3, GNB1 and GNG2. Component of the TAS2R14-GNAS2 complex, consisting of TAS2R14, GNAS2, GNB1 and GNG2. Post-translationally, phosphorylation at His-266 by NDKB contributes to G protein activation by increasing the high energetic phosphate transfer onto GDP.

Its function is as follows. Guanine nucleotide-binding proteins (G proteins) are involved as a modulator or transducer in various transmembrane signaling systems. The beta and gamma chains are required for the GTPase activity, for replacement of GDP by GTP, and for G protein-effector interaction. The sequence is that of Guanine nucleotide-binding protein G(I)/G(S)/G(T) subunit beta-1 (GNB1) from Pongo abelii (Sumatran orangutan).